The following is a 147-amino-acid chain: Hemoglobin subunit beta-H0 (147 aa).

Residues 3–147 (HFTAEEKAAI…VATALSHKYH (145 aa)) enclose the Globin domain. The heme b site is built by H64 and H93.

It belongs to the globin family. Heterotetramer of two alpha chains and two beta chains. Red blood cells.

This is a minor early embryonic beta chain. The polypeptide is Hemoglobin subunit beta-H0 (Hbb-bh0) (Mus musculus (Mouse)).